The following is a 353-amino-acid chain: Soluble interferon alpha/beta receptor OPG204 (353 aa).

Positions 1–21 are cleaved as a signal peptide; sequence MTMKMMVHIYFVSLSLLLLLF. 2 Ig-like C2-type domains span residues 67-139 and 157-239; these read LGEP…KNGD and PKTY…IVVS. 2 cysteine pairs are disulfide-bonded: cysteine 75/cysteine 131 and cysteine 174/cysteine 223. Asparagine 119, asparagine 184, asparagine 263, asparagine 271, and asparagine 323 each carry an N-linked (GlcNAc...) asparagine; by host glycan. The 100-residue stretch at 248–347 folds into the Ig-like V-type domain; sequence PSQDHRFKLI…HNYYFEKTLT (100 aa). A disulfide bridge connects residues cysteine 274 and cysteine 335.

Belongs to the interleukin-1 receptor family. As to quaternary structure, interacts with host IFNA1.

It is found in the secreted. In terms of biological role, counteracts the antiviral effects of host IFN-alpha/beta and key IFN-inducible proteins involved in viral RNA degradation suxh as host OAS1. Acts as a soluble IFN-alpha receptor and thus inhibits the interaction between host IFN-alpha and its receptor. The sequence is that of Soluble interferon alpha/beta receptor OPG204 (OPG204) from Homo sapiens (Human).